The primary structure comprises 302 residues: Phosphatidylglycerol--prolipoprotein diacylglyceryl transferase (302 aa).

Helical transmembrane passes span Trp-26 to Val-46, Leu-67 to Tyr-87, and Ile-108 to Leu-128. Arg-156 is an a 1,2-diacyl-sn-glycero-3-phospho-(1'-sn-glycerol) binding site. Transmembrane regions (helical) follow at residues Gly-231–Val-251 and Leu-263–Leu-283.

This sequence belongs to the Lgt family.

It localises to the cell inner membrane. It carries out the reaction L-cysteinyl-[prolipoprotein] + a 1,2-diacyl-sn-glycero-3-phospho-(1'-sn-glycerol) = an S-1,2-diacyl-sn-glyceryl-L-cysteinyl-[prolipoprotein] + sn-glycerol 1-phosphate + H(+). It functions in the pathway protein modification; lipoprotein biosynthesis (diacylglyceryl transfer). Catalyzes the transfer of the diacylglyceryl group from phosphatidylglycerol to the sulfhydryl group of the N-terminal cysteine of a prolipoprotein, the first step in the formation of mature lipoproteins. The protein is Phosphatidylglycerol--prolipoprotein diacylglyceryl transferase of Caulobacter sp. (strain K31).